Reading from the N-terminus, the 65-residue chain is Probable movement protein p8 (65 aa).

Positions 1-10 (MENTENVRSG) are enriched in polar residues. Residues 1–47 (MENTENVRSGRNQREYSKERQQEGGYKEVSKAAVRKEGDVKQDMGPS) form a disordered region. Positions 12–42 (NQREYSKERQQEGGYKEVSKAAVRKEGDVKQ) are enriched in basic and acidic residues.

Belongs to the carmovirus/necrovirus/panicovirus movement protein p8 family.

In terms of biological role, cell-to-cell movement. This is Probable movement protein p8 from Tobacco necrosis virus (strain D) (TNV-D).